We begin with the raw amino-acid sequence, 354 residues long: Malate dehydrogenase 2, peroxisomal (354 aa).

Residues 10 to 18 form a peroxisomal targeting signal PTS2 region; that stretch reads RIARISAHL. NAD(+)-binding positions include 49 to 55 and aspartate 75; that span reads GAAGGIG. Arginine 122 and arginine 128 together coordinate substrate. NAD(+)-binding positions include asparagine 135 and 158–160; that span reads ISN. Positions 160 and 194 each coordinate substrate. Histidine 218 functions as the Proton acceptor in the catalytic mechanism. Residue methionine 269 participates in NAD(+) binding.

It belongs to the LDH/MDH superfamily. MDH type 1 family. Homodimer. In terms of tissue distribution, expressed in rosette leaves.

It localises to the peroxisome. The enzyme catalyses (S)-malate + NAD(+) = oxaloacetate + NADH + H(+). Catalyzes a reversible NAD-dependent dehydrogenase reaction involved in central metabolism and redox homeostasis between organelle compartments. Peroxisomal NAD-dependent malate dehydrogenase involved in fatty acid beta-oxidation. Reoxidizes NADH from the beta-oxidation and provides NAD for the conversion of fatty acyl-CoA to acetyl-CoA. Does not participate directly in the glyoxylate cycle. Required for maintenance of photosynthetic rates under photorespiratory conditions, and carbon flow during photorespiration. Supplies NADH reductant to the peroxisomal hydroxypyruvate reductase (HPR), which reduces hydroxypyruvate into glycerate in the photorespiratory cycle. This is Malate dehydrogenase 2, peroxisomal from Arabidopsis thaliana (Mouse-ear cress).